The primary structure comprises 231 residues: DNA mismatch repair protein MutH (231 aa).

This sequence belongs to the MutH family.

The protein localises to the cytoplasm. Sequence-specific endonuclease that cleaves unmethylated GATC sequences. It is involved in DNA mismatch repair. The polypeptide is DNA mismatch repair protein MutH (Salmonella paratyphi A (strain ATCC 9150 / SARB42)).